The sequence spans 236 residues: Ribosomal RNA large subunit methyltransferase E (236 aa).

Residues G76, W78, D99, D115, and D140 each coordinate S-adenosyl-L-methionine. Residue K180 is the Proton acceptor of the active site.

This sequence belongs to the class I-like SAM-binding methyltransferase superfamily. RNA methyltransferase RlmE family.

It localises to the cytoplasm. It carries out the reaction uridine(2552) in 23S rRNA + S-adenosyl-L-methionine = 2'-O-methyluridine(2552) in 23S rRNA + S-adenosyl-L-homocysteine + H(+). Specifically methylates the uridine in position 2552 of 23S rRNA at the 2'-O position of the ribose in the fully assembled 50S ribosomal subunit. The polypeptide is Ribosomal RNA large subunit methyltransferase E (Rhodopseudomonas palustris (strain HaA2)).